Here is a 223-residue protein sequence, read N- to C-terminus: 7-cyano-7-deazaguanine synthase (223 aa).

15 to 25 (FSGGQDSTTCL) serves as a coordination point for ATP. 4 residues coordinate Zn(2+): C191, C200, C203, and C206.

Belongs to the QueC family. As to quaternary structure, homodimer. Zn(2+) is required as a cofactor.

The enzyme catalyses 7-carboxy-7-deazaguanine + NH4(+) + ATP = 7-cyano-7-deazaguanine + ADP + phosphate + H2O + H(+). It functions in the pathway purine metabolism; 7-cyano-7-deazaguanine biosynthesis. In terms of biological role, catalyzes the ATP-dependent conversion of 7-carboxy-7-deazaguanine (CDG) to 7-cyano-7-deazaguanine (preQ(0)). This Staphylococcus haemolyticus (strain JCSC1435) protein is 7-cyano-7-deazaguanine synthase.